The chain runs to 42 residues: MCIFFFFKKLFFVEINVCLSFFFLFYFIFVLFFAAEVRNNDF.

A helical membrane pass occupies residues 15–35 (INVCLSFFFLFYFIFVLFFAA).

The protein resides in the membrane. This is an uncharacterized protein from Dictyostelium discoideum (Social amoeba).